The following is a 486-amino-acid chain: Cysteine--tRNA ligase (486 aa).

C30 provides a ligand contact to Zn(2+). The short motif at 32–42 (PTVYDRAHLGN) is the 'HIGH' region element. Residues C221, H246, and E250 each coordinate Zn(2+). A 'KMSKS' region motif is present at residues 279-283 (KMSKS). K282 serves as a coordination point for ATP.

It belongs to the class-I aminoacyl-tRNA synthetase family. As to quaternary structure, monomer. Requires Zn(2+) as cofactor.

The protein localises to the cytoplasm. The enzyme catalyses tRNA(Cys) + L-cysteine + ATP = L-cysteinyl-tRNA(Cys) + AMP + diphosphate. The polypeptide is Cysteine--tRNA ligase (Cereibacter sphaeroides (strain ATCC 17029 / ATH 2.4.9) (Rhodobacter sphaeroides)).